We begin with the raw amino-acid sequence, 204 residues long: MAGPRRKSPGITPDILLRAYSIGLFPMAESADDPEIFWVEPELRGVLPLDNFHISKSLAKRVRRRPFEIRFDHDFEQVIAACAEETSGRPSTWINQTIRSLYATLFEIGHAHTVEAWDGDELVGGLYGVSLGSAFFGESMFSRRTDASKICLVHLVERLREKGFTLLDTQFTTEHLKTFGAIDVPKAEYALLLAVAMESPHLKF.

It belongs to the L/F-transferase family.

It localises to the cytoplasm. The catalysed reaction is N-terminal L-lysyl-[protein] + L-leucyl-tRNA(Leu) = N-terminal L-leucyl-L-lysyl-[protein] + tRNA(Leu) + H(+). It catalyses the reaction N-terminal L-arginyl-[protein] + L-leucyl-tRNA(Leu) = N-terminal L-leucyl-L-arginyl-[protein] + tRNA(Leu) + H(+). The enzyme catalyses L-phenylalanyl-tRNA(Phe) + an N-terminal L-alpha-aminoacyl-[protein] = an N-terminal L-phenylalanyl-L-alpha-aminoacyl-[protein] + tRNA(Phe). Its function is as follows. Functions in the N-end rule pathway of protein degradation where it conjugates Leu, Phe and, less efficiently, Met from aminoacyl-tRNAs to the N-termini of proteins containing an N-terminal arginine or lysine. The chain is Leucyl/phenylalanyl-tRNA--protein transferase from Rhizobium etli (strain ATCC 51251 / DSM 11541 / JCM 21823 / NBRC 15573 / CFN 42).